The primary structure comprises 114 residues: Probable divalent-cation tolerance protein cutA homolog (114 aa).

This sequence belongs to the CutA family. As to quaternary structure, homotrimer.

The polypeptide is Probable divalent-cation tolerance protein cutA homolog (Encephalitozoon cuniculi (strain GB-M1) (Microsporidian parasite)).